Reading from the N-terminus, the 313-residue chain is Protoheme IX farnesyltransferase (313 aa).

A run of 9 helical transmembrane segments spans residues L35–L55, A56–W76, V98–L118, V120–V140, I153–G173, I180–F200, I226–F246, A248–V268, and L292–I312.

It belongs to the UbiA prenyltransferase family. Protoheme IX farnesyltransferase subfamily.

The protein resides in the cell inner membrane. It carries out the reaction heme b + (2E,6E)-farnesyl diphosphate + H2O = Fe(II)-heme o + diphosphate. Its pathway is porphyrin-containing compound metabolism; heme O biosynthesis; heme O from protoheme: step 1/1. In terms of biological role, converts heme B (protoheme IX) to heme O by substitution of the vinyl group on carbon 2 of heme B porphyrin ring with a hydroxyethyl farnesyl side group. The sequence is that of Protoheme IX farnesyltransferase from Afipia carboxidovorans (strain ATCC 49405 / DSM 1227 / KCTC 32145 / OM5) (Oligotropha carboxidovorans).